The sequence spans 255 residues: 5'-nucleotidase SurE (255 aa).

D16, D17, S47, and N100 together coordinate a divalent metal cation.

This sequence belongs to the SurE nucleotidase family. It depends on a divalent metal cation as a cofactor.

It is found in the cytoplasm. It catalyses the reaction a ribonucleoside 5'-phosphate + H2O = a ribonucleoside + phosphate. Functionally, nucleotidase that shows phosphatase activity on nucleoside 5'-monophosphates. This is 5'-nucleotidase SurE from Vibrio vulnificus (strain YJ016).